We begin with the raw amino-acid sequence, 235 residues long: MKVLVSPMSVAEAIEAIEGGADIIDVKNPAEGSLGANFPWVIREISELAKKYGKEISATTGDMPYKPGTASLAALGAAVAGADYIKVGLYGVKNAEEAYEMMVGVVRAVKDFDSSKKVVAAGYGDYYRISSVSPLDLPEAVAKAGADIVMVDTAIKDGTSLFDHMKIGDIESFVKLARDNGLMVALAGNISWNHIETLKELSPDIIGVRSIVCEGDRSSMIKRELVVKLMEAVHG.

The Schiff-base intermediate with substrate role is filled by lysine 27. The active-site Proton acceptor is lysine 86.

Belongs to the MfnB family.

The catalysed reaction is 2 D-glyceraldehyde 3-phosphate = 4-(hydroxymethyl)-2-furancarboxaldehyde phosphate + phosphate + 2 H2O. Its pathway is cofactor biosynthesis; methanofuran biosynthesis. In terms of biological role, catalyzes the formation of 4-(hydroxymethyl)-2-furancarboxaldehyde phosphate (4-HFC-P) from two molecules of glyceraldehyde-3-P (GA-3-P). This chain is (5-formylfuran-3-yl)methyl phosphate synthase, found in Archaeoglobus fulgidus (strain ATCC 49558 / DSM 4304 / JCM 9628 / NBRC 100126 / VC-16).